An 83-amino-acid polypeptide reads, in one-letter code: Cytochrome b559 subunit alpha (83 aa).

Residues 21 to 35 (VIHSITIPSLFVAGW) form a helical membrane-spanning segment. Histidine 23 lines the heme pocket.

It belongs to the PsbE/PsbF family. As to quaternary structure, heterodimer of an alpha subunit and a beta subunit. PSII is composed of 1 copy each of membrane proteins PsbA, PsbB, PsbC, PsbD, PsbE, PsbF, PsbH, PsbI, PsbJ, PsbK, PsbL, PsbM, PsbT, PsbX, PsbY, PsbZ, Psb30/Ycf12, at least 3 peripheral proteins of the oxygen-evolving complex and a large number of cofactors. It forms dimeric complexes. Heme b is required as a cofactor.

Its subcellular location is the plastid. The protein resides in the chloroplast thylakoid membrane. This b-type cytochrome is tightly associated with the reaction center of photosystem II (PSII). PSII is a light-driven water:plastoquinone oxidoreductase that uses light energy to abstract electrons from H(2)O, generating O(2) and a proton gradient subsequently used for ATP formation. It consists of a core antenna complex that captures photons, and an electron transfer chain that converts photonic excitation into a charge separation. The chain is Cytochrome b559 subunit alpha from Nephroselmis olivacea (Green alga).